The chain runs to 384 residues: 8-amino-7-oxononanoate synthase (384 aa).

Arg-21 serves as a coordination point for substrate. 108 to 109 (GF) provides a ligand contact to pyridoxal 5'-phosphate. His-133 is a substrate binding site. Pyridoxal 5'-phosphate is bound by residues Ser-179, His-207, and Thr-233. The residue at position 236 (Lys-236) is an N6-(pyridoxal phosphate)lysine. Substrate is bound at residue Thr-352.

It belongs to the class-II pyridoxal-phosphate-dependent aminotransferase family. BioF subfamily. As to quaternary structure, homodimer. It depends on pyridoxal 5'-phosphate as a cofactor.

It catalyses the reaction 6-carboxyhexanoyl-[ACP] + L-alanine + H(+) = (8S)-8-amino-7-oxononanoate + holo-[ACP] + CO2. The protein operates within cofactor biosynthesis; biotin biosynthesis. Functionally, catalyzes the decarboxylative condensation of pimeloyl-[acyl-carrier protein] and L-alanine to produce 8-amino-7-oxononanoate (AON), [acyl-carrier protein], and carbon dioxide. This Escherichia coli O8 (strain IAI1) protein is 8-amino-7-oxononanoate synthase.